Reading from the N-terminus, the 950-residue chain is A disintegrin and metalloproteinase with thrombospondin motifs 15 (950 aa).

An N-terminal signal peptide occupies residues 1–17 (MLLLGILTLAFAGRTAG). A propeptide spanning residues 18–212 (GSEPEREVVV…SRRRSGRAKR (195 aa)) is cleaved from the precursor. An N-linked (GlcNAc...) asparagine glycan is attached at Asn141. Residues 151 to 172 (SQGAHLLQRRGVPGGPSGDPTS) form a disordered region. The Cysteine switch signature appears at 172 to 179 (SRCGVASG). Position 174 (Cys174) interacts with Zn(2+). Positions 218–427 (RYVETLVVAD…GHGDCLLDQP (210 aa)) constitute a Peptidase M12B domain. Cystine bridges form between Cys293-Cys345, Cys322-Cys327, Cys339-Cys422, Cys377-Cys406, Cys448-Cys470, Cys459-Cys480, Cys465-Cys499, Cys493-Cys504, Cys528-Cys565, Cys532-Cys570, and Cys543-Cys555. His361 lines the Zn(2+) pocket. Residue Glu362 is part of the active site. Residues His365 and His371 each coordinate Zn(2+). The 88-residue stretch at 428 to 515 (SKPISLPEDL…ERHNLNKHRV (88 aa)) folds into the Disintegrin domain. The 56-residue stretch at 516–571 (DGSWAKWDPYGPCSRTCGGGVQLARRQCTNPTPANGGKYCEGVRVKYRSCNLEPCP) folds into the TSP type-1 1 domain. N-linked (GlcNAc...) asparagine glycans are attached at residues Asn591, Asn623, and Asn679. Positions 701–838 (AIPAGASSID…SNQVEQPDDR (138 aa)) are spacer. Positions 798–822 (FYLPKEPREDKSSHPKDPRGPSVLH) are disordered. The span at 802–816 (KEPREDKSSHPKDPR) shows a compositional bias: basic and acidic residues. 2 TSP type-1 domains span residues 839 to 895 (PPAR…EPCP) and 896 to 949 (TWEL…VLRP).

The cofactor is Zn(2+). In terms of processing, the precursor is cleaved by a furin endopeptidase. Post-translationally, glycosylated. Can be O-fucosylated by POFUT2 on a serine or a threonine residue found within the consensus sequence C1-X(2)-(S/T)-C2-G of the TSP type-1 repeat domains where C1 and C2 are the first and second cysteine residue of the repeat, respectively. Fucosylated repeats can then be further glycosylated by the addition of a beta-1,3-glucose residue by the glucosyltransferase, B3GALTL. Fucosylation mediates the efficient secretion of ADAMTS family members. Can be C-glycosylated with one or two mannose molecules on tryptophan residues within the consensus sequence W-X-X-W of the TPRs. Also N-glycosylated. These other glycosylations can also facilitate secretion. Expressed in fetal liver and kidney, but not in any of the adult tissues examined.

The protein resides in the secreted. It is found in the extracellular space. It localises to the extracellular matrix. The protein localises to the cell surface. Functionally, metalloprotease which has proteolytic activity against the proteoglycan VCAN, cleaving it at the 'Glu-1428-|-1429-Ala' site. Cleaves VCAN in the pericellular matrix surrounding myoblasts, facilitating myoblast contact and fusion which is required for skeletal muscle development and regeneration. The polypeptide is A disintegrin and metalloproteinase with thrombospondin motifs 15 (ADAMTS15) (Homo sapiens (Human)).